A 236-amino-acid chain; its full sequence is Adenosine 5'-phosphosulfate reductase (236 aa).

[4Fe-4S] cluster-binding residues include Cys-123, Cys-124, Cys-206, and Cys-209. Residue Cys-232 is the Nucleophile; cysteine thiosulfonate intermediate of the active site.

The protein belongs to the PAPS reductase family. CysH subfamily. The cofactor is [4Fe-4S] cluster.

The protein localises to the cytoplasm. The catalysed reaction is [thioredoxin]-disulfide + sulfite + AMP + 2 H(+) = adenosine 5'-phosphosulfate + [thioredoxin]-dithiol. It participates in sulfur metabolism; hydrogen sulfide biosynthesis; sulfite from sulfate. Its function is as follows. Catalyzes the formation of sulfite from adenosine 5'-phosphosulfate (APS) using thioredoxin as an electron donor. The chain is Adenosine 5'-phosphosulfate reductase from Streptomyces coelicolor (strain ATCC BAA-471 / A3(2) / M145).